Reading from the N-terminus, the 131-residue chain is UPF0102 protein YraN (131 aa).

The segment covering 1 to 19 (MATVPTRSGSPRQLTTKQT) has biased composition (polar residues). The tract at residues 1-20 (MATVPTRSGSPRQLTTKQTG) is disordered.

The protein belongs to the UPF0102 family.

This is UPF0102 protein YraN from Shigella boydii serotype 18 (strain CDC 3083-94 / BS512).